The following is a 233-amino-acid chain: 7-cyano-7-deazaguanine synthase (233 aa).

7–17 (LSGGLDSAVTS) is a binding site for ATP. Residues Cys195, Cys206, Cys209, and Cys212 each contribute to the Zn(2+) site.

Belongs to the QueC family. Zn(2+) serves as cofactor.

The catalysed reaction is 7-carboxy-7-deazaguanine + NH4(+) + ATP = 7-cyano-7-deazaguanine + ADP + phosphate + H2O + H(+). It participates in purine metabolism; 7-cyano-7-deazaguanine biosynthesis. Its function is as follows. Catalyzes the ATP-dependent conversion of 7-carboxy-7-deazaguanine (CDG) to 7-cyano-7-deazaguanine (preQ(0)). This is 7-cyano-7-deazaguanine synthase from Methanococcus maripaludis (strain C7 / ATCC BAA-1331).